Reading from the N-terminus, the 243-residue chain is Carboxy-S-adenosyl-L-methionine synthase (243 aa).

Residues Tyr-40, 65-67 (GCS), 90-91 (DN), 118-119 (DI), Asn-133, and Arg-200 each bind S-adenosyl-L-methionine.

The protein belongs to the class I-like SAM-binding methyltransferase superfamily. Cx-SAM synthase family. As to quaternary structure, homodimer.

It carries out the reaction prephenate + S-adenosyl-L-methionine = carboxy-S-adenosyl-L-methionine + 3-phenylpyruvate + H2O. Catalyzes the conversion of S-adenosyl-L-methionine (SAM) to carboxy-S-adenosyl-L-methionine (Cx-SAM). This Shewanella sp. (strain MR-7) protein is Carboxy-S-adenosyl-L-methionine synthase.